Reading from the N-terminus, the 127-residue chain is Protein yippee-like 4 (127 aa).

Residues 27 to 124 (RTYSCVHCRA…IEMSHMVKDN (98 aa)) enclose the Yippee domain. The Zn(2+) site is built by C31, C34, C87, and C90. 2 positions are modified to phosphothreonine: T92 and T93. A Phosphotyrosine modification is found at Y98.

It belongs to the yippee family.

Its subcellular location is the nucleus. The protein localises to the nucleolus. The protein is Protein yippee-like 4 (YPEL4) of Chlorocebus aethiops (Green monkey).